Reading from the N-terminus, the 87-residue chain is Large ribosomal subunit protein bL27 (87 aa).

Positions 1–21 (MAHKKAGGSSRNGRDSESKRL) are disordered.

The protein belongs to the bacterial ribosomal protein bL27 family.

This chain is Large ribosomal subunit protein bL27, found in Paraburkholderia phytofirmans (strain DSM 17436 / LMG 22146 / PsJN) (Burkholderia phytofirmans).